The chain runs to 234 residues: UPF0173 metal-dependent hydrolase Atu1317 (234 aa).

Belongs to the UPF0173 family.

This chain is UPF0173 metal-dependent hydrolase Atu1317, found in Agrobacterium fabrum (strain C58 / ATCC 33970) (Agrobacterium tumefaciens (strain C58)).